Reading from the N-terminus, the 543-residue chain is Sarafotoxin (543 aa).

Positions methionine 1–glycine 23 are cleaved as a signal peptide. The propeptide occupies lysine 24–leucine 69. Residues glycine 45–asparagine 65 form a disordered region. Tandem repeats lie at residues glycine 51–tryptophan 90, arginine 91–tryptophan 130, arginine 131–tryptophan 170, arginine 171–tryptophan 210, arginine 211–tryptophan 250, arginine 251–tryptophan 290, arginine 291–tryptophan 330, arginine 331–tryptophan 370, arginine 371–tryptophan 410, arginine 411–tryptophan 450, arginine 451–tryptophan 490, and arginine 491–tryptophan 530. Residues glycine 51 to tryptophan 530 are 12 X 40 AA tandem repeats. 2 disulfides stabilise this stretch: cysteine 70/cysteine 84 and cysteine 72/cysteine 80. Positions aspartate 92 to leucine 109 are excised as a propeptide. 2 disulfide bridges follow: cysteine 110/cysteine 124 and cysteine 112/cysteine 120. A propeptide spanning residues aspartate 132–leucine 149 is cleaved from the precursor. Cystine bridges form between cysteine 150-cysteine 164 and cysteine 152-cysteine 160. Residues aspartate 172–leucine 189 constitute a propeptide that is removed on maturation. Disulfide bonds link cysteine 190–cysteine 204 and cysteine 192–cysteine 200. Positions aspartate 212–leucine 229 are excised as a propeptide. 2 disulfide bridges follow: cysteine 230–cysteine 244 and cysteine 232–cysteine 240. The propeptide occupies aspartate 252–leucine 269. Intrachain disulfides connect cysteine 270-cysteine 284 and cysteine 272-cysteine 280. A propeptide spanning residues aspartate 292 to leucine 309 is cleaved from the precursor. Disulfide bonds link cysteine 310/cysteine 324 and cysteine 312/cysteine 320. Positions aspartate 332–leucine 349 are excised as a propeptide. Disulfide bonds link cysteine 350/cysteine 364 and cysteine 352/cysteine 360. Positions aspartate 372 to leucine 389 are excised as a propeptide. 2 disulfide bridges follow: cysteine 390/cysteine 404 and cysteine 392/cysteine 400. Residues aspartate 412 to leucine 429 constitute a propeptide that is removed on maturation. 2 disulfides stabilise this stretch: cysteine 430-cysteine 444 and cysteine 432-cysteine 440. The propeptide occupies aspartate 452–leucine 469. 2 disulfide bridges follow: cysteine 470/cysteine 484 and cysteine 472/cysteine 480. Residues aspartate 492 to leucine 509 constitute a propeptide that is removed on maturation. 2 cysteine pairs are disulfide-bonded: cysteine 510/cysteine 524 and cysteine 512/cysteine 520. A propeptide spanning residues asparagine 532–glycine 543 is cleaved from the precursor.

This sequence belongs to the endothelin/sarafotoxin family. As to expression, expressed by the venom gland.

Its subcellular location is the secreted. Functionally, vasoconstrictor activity. These toxins cause cardiac arrest probably as a result of coronary vasospasm. In terms of biological role, vasoconstrictor activity. Causes cardiac arrest probably as a result of coronary vasospasm. Displays high agonistic activities towards endothelin-2 receptor (EDNRB) (displays affinity in the picomolar range) and endothelin-1 receptor (EDNRA) (lower affinities). This is Sarafotoxin from Atractaspis engaddensis (Israeli burrowing asp).